A 496-amino-acid polypeptide reads, in one-letter code: Neuronal acetylcholine receptor subunit beta-4 (496 aa).

Residues 1–19 (MRSALPLVLFSLVALCGRG) form the signal peptide. Residues 20 to 236 (DCRVANAEEK…IIKRKPLFYT (217 aa)) are Extracellular-facing. Residues Asn36, Asn93, Asn138, and Asn166 are each glycosylated (N-linked (GlcNAc...) asparagine). Cys153 and Cys167 are joined by a disulfide. The helical transmembrane segment at 237–257 (INLIIPCVLITSLAILVFYLP) threads the bilayer. Residues 258–265 (SDCGEKMT) are Cytoplasmic-facing. Glu262 is a binding site for Na(+). A helical membrane pass occupies residues 266 to 286 (LCISVLLALTVFLLLISKIVP). Topologically, residues 287–298 (PTSLNVPLIGKY) are extracellular. Residues 299-319 (LMFTMVLVTFSIVTSVCVLNV) form a helical membrane-spanning segment. At 320-464 (HHRSPSTHTM…WKYVAMVVDR (145 aa)) the chain is on the cytoplasmic side. The chain crosses the membrane as a helical span at residues 465-485 (LFLWVFVVVCVLGTVGLFLPP). Residues 486-496 (LFQTHTPSEEP) lie on the Extracellular side of the membrane.

This sequence belongs to the ligand-gated ion channel (TC 1.A.9) family. Acetylcholine receptor (TC 1.A.9.1) subfamily. Beta-4/CHRNB4 sub-subfamily. In terms of assembly, neuronal AChR is composed of two different types of subunits: alpha and beta. CHRNB4/Beta-4 subunit can be combined to CHRNA2/alpha-2, CHRNA3/alpha-3 or CHRNA4/alpha-4, CHRNA5/alpha-5 and CHRNB3/beta-3 to give rise to functional receptors. Forms stoichiometries such as (CHRNA3)2:(CHRNB4)3 or (CHRNA3:CHRNB4)2:CHRNB3. Interacts with RIC3; which is required for proper folding and assembly. Interacts with LYPD6.

Its subcellular location is the synaptic cell membrane. The protein localises to the cell membrane. The catalysed reaction is Ca(2+)(in) = Ca(2+)(out). The enzyme catalyses K(+)(in) = K(+)(out). It carries out the reaction Na(+)(in) = Na(+)(out). Its function is as follows. Component of neuronal acetylcholine receptors (nAChRs) that function as pentameric, ligand-gated cation channels with high calcium permeability among other activities. nAChRs are excitatory neurotrasnmitter receptors formed by a collection of nAChR subunits known to mediate synaptic transmission in the nervous system and the neuromuscular junction. Each nAchR subunit confers differential attributes to channel properties, including activation, deactivation and desensitization kinetics, pH sensitivity, cation permeability, and binding to allosteric modulators. CHRNB4 forms heteropentameric neuronal acetylcholine receptors with CHRNA2, CHRNA3 and CHRNA4, as well as CHRNA5 and CHRNB3 as accesory subunits. CHRNA3:CHRNB4 being predominant in neurons of the autonomic ganglia, it is known as ganglionic nicotinic receptor. CHRNA3:CHRNB4 or CHRNA3:CHRNA5:CHRNB4 play also an important role in the habenulo-interpeduncular tract, modulating the mesolimbic dopamine system and affecting reward circuits and addiction. Hypothalamic CHRNA3:CHRNB4 nAChR activation by nicotine leads to activation of POMC neurons and a decrease in food intake. The chain is Neuronal acetylcholine receptor subunit beta-4 (CHRNB4) from Bos taurus (Bovine).